The chain runs to 120 residues: NAD(P)H-quinone oxidoreductase subunit 3, chloroplastic (120 aa).

Transmembrane regions (helical) follow at residues 9-29 (IFWAFLIISSVIPIFAFIISG), 60-80 (ICYYMFALVFVVFDVETVFLY), and 88-108 (ILGVSVFIEALIFVLILIVGS).

Belongs to the complex I subunit 3 family. As to quaternary structure, NDH is composed of at least 16 different subunits, 5 of which are encoded in the nucleus.

Its subcellular location is the plastid. The protein resides in the chloroplast thylakoid membrane. The catalysed reaction is a plastoquinone + NADH + (n+1) H(+)(in) = a plastoquinol + NAD(+) + n H(+)(out). The enzyme catalyses a plastoquinone + NADPH + (n+1) H(+)(in) = a plastoquinol + NADP(+) + n H(+)(out). In terms of biological role, NDH shuttles electrons from NAD(P)H:plastoquinone, via FMN and iron-sulfur (Fe-S) centers, to quinones in the photosynthetic chain and possibly in a chloroplast respiratory chain. The immediate electron acceptor for the enzyme in this species is believed to be plastoquinone. Couples the redox reaction to proton translocation, and thus conserves the redox energy in a proton gradient. This Morus indica (Mulberry) protein is NAD(P)H-quinone oxidoreductase subunit 3, chloroplastic.